Here is a 284-residue protein sequence, read N- to C-terminus: NAD kinase (284 aa).

The Proton acceptor role is filled by Asp-61. Residues 61–62 (DG), Arg-66, 136–137 (ND), Arg-147, Lys-164, Asp-166, and Leu-201 contribute to the NAD(+) site.

It belongs to the NAD kinase family. A divalent metal cation serves as cofactor.

Its subcellular location is the cytoplasm. It catalyses the reaction NAD(+) + ATP = ADP + NADP(+) + H(+). Functionally, involved in the regulation of the intracellular balance of NAD and NADP, and is a key enzyme in the biosynthesis of NADP. Catalyzes specifically the phosphorylation on 2'-hydroxyl of the adenosine moiety of NAD to yield NADP. The polypeptide is NAD kinase (Dehalococcoides mccartyi (strain CBDB1)).